We begin with the raw amino-acid sequence, 297 residues long: uncharacterized protein (297 aa).

E46 is an active-site residue.

This sequence belongs to the PhzF family. Homodimer and homotetramer.

This is an uncharacterized protein from Escherichia coli (strain K12).